The following is a 564-amino-acid chain: Bicarbonate transporter BicA (564 aa).

Residues 1 to 11 (MQITNKIHFRN) lie on the Cytoplasmic side of the membrane. The helical transmembrane segment at 12 to 37 (LQGDLFGGVTAAVIALPMALAFGIAS) threads the bilayer. Over 38 to 40 (GAG) the chain is Periplasmic. The helical transmembrane segment at 41–58 (ATAGLWGAVIVGFFAALF) threads the bilayer. The Cytoplasmic segment spans residues 59-70 (GGTPTLISEPTG). Threonine 69 contacts hydrogencarbonate. The helical transmembrane segment at 71 to 86 (PMTVVQTAVIASLVAA) threads the bilayer. Residues 87–90 (DPDN) are Periplasmic-facing. The chain crosses the membrane as a helical span at residues 91 to 112 (GLAMAFTVVMMAGLFQIAFGLL). The Cytoplasmic portion of the chain corresponds to 113 to 122 (KLGKYVTMMP). Residues 123–145 (YTVISGFMSGIGIILVILQLAPF) traverse the membrane as a helical segment. The Periplasmic segment spans residues 146 to 170 (LGQASPKGGVIGTLQALPNLVSNVR). The helical transmembrane segment at 171 to 185 (PVETLLALMTVGIIW) threads the bilayer. The Cytoplasmic portion of the chain corresponds to 186-196 (FMPSRWKKFAP). The helical transmembrane segment at 197 to 211 (PQLVALVLGTIISIT) threads the bilayer. Residues 212-240 (LFGDLDIRRIGEIQAGLPALQLPVFQADQ) lie on the Periplasmic side of the membrane. Residues 241–269 (LQRMLIDAAVLGMLGCIDALLTSVVADSL) traverse the membrane as a helical segment. Positions 258 and 262 each coordinate Na(+). At 270 to 275 (TRTEHN) the chain is on the cytoplasmic side. A helical membrane pass occupies residues 276–292 (SNKELVGQGIGNVMSGL). Topologically, residues 293–302 (FGGLGGAGAT) are periplasmic. Residue glycine 300 participates in Na(+) binding. Alanine 301 is a hydrogencarbonate binding site. Threonine 302 is a Na(+) binding site. The chain crosses the membrane as a helical span at residues 303 to 312 (MGTVVNIQSG). Residues 313 to 315 (GRT) lie on the Cytoplasmic side of the membrane. Residues 316–338 (ALSGLIRAMVLLVVILGAAKLAA) traverse the membrane as a helical segment. Residues 339 to 341 (TIP) are Periplasmic-facing. The chain crosses the membrane as a helical span at residues 342–357 (LAVLAGIAFKVGVDII). Topologically, residues 358-369 (DWGFLKRAHHVS) are cytoplasmic. A helical membrane pass occupies residues 370 to 390 (IKGALIMYAVIVLTVLVDLIA). Over 391 to 392 (AV) the chain is Periplasmic. The helical transmembrane segment at 393-405 (GIGVFIANILTID) threads the bilayer. The Cytoplasmic portion of the chain corresponds to 406–564 (RMSALQSKAV…PSSSSVQTTY (159 aa)). The 111-residue stretch at 432–542 (KRWLDEGNGR…DDRSEALKDA (111 aa)) folds into the STAS domain.

The protein belongs to the SLC26A/SulP transporter (TC 2.A.53) family. Forms homodimers through the STAS cytoplasmic domain.

The protein localises to the cell inner membrane. Functionally, low affinity, high-flux Na(+)-dependent bicarbonate transporter. Involved in carbone dioxide-concentrating mechanisms (CCMs) that accumulate CO(2) and improve photosynthetic carbon fixation. In Synechocystis sp. (strain ATCC 27184 / PCC 6803 / Kazusa), this protein is Bicarbonate transporter BicA.